A 527-amino-acid chain; its full sequence is Bifunctional purine biosynthesis protein PurH (527 aa).

The MGS-like domain occupies 1 to 149; that stretch reads MASDFLPVRR…KNFARVAVAT (149 aa).

It belongs to the PurH family.

The enzyme catalyses (6R)-10-formyltetrahydrofolate + 5-amino-1-(5-phospho-beta-D-ribosyl)imidazole-4-carboxamide = 5-formamido-1-(5-phospho-D-ribosyl)imidazole-4-carboxamide + (6S)-5,6,7,8-tetrahydrofolate. The catalysed reaction is IMP + H2O = 5-formamido-1-(5-phospho-D-ribosyl)imidazole-4-carboxamide. It functions in the pathway purine metabolism; IMP biosynthesis via de novo pathway; 5-formamido-1-(5-phospho-D-ribosyl)imidazole-4-carboxamide from 5-amino-1-(5-phospho-D-ribosyl)imidazole-4-carboxamide (10-formyl THF route): step 1/1. Its pathway is purine metabolism; IMP biosynthesis via de novo pathway; IMP from 5-formamido-1-(5-phospho-D-ribosyl)imidazole-4-carboxamide: step 1/1. This chain is Bifunctional purine biosynthesis protein PurH, found in Xanthomonas oryzae pv. oryzae (strain MAFF 311018).